The sequence spans 161 residues: Phage-like element PBSX protein XkdI (161 aa).

It to B.subtilis YqbI.

The chain is Phage-like element PBSX protein XkdI (xkdI) from Bacillus subtilis (strain 168).